A 133-amino-acid polypeptide reads, in one-letter code: Fatty acid-binding protein homolog 1 (133 aa).

Residue Met1 is modified to N-acetylmethionine. Residues Arg107 and 127–129 (RTY) each bind hexadecanoate.

The protein belongs to the calycin superfamily. Fatty-acid binding protein (FABP) family.

In terms of biological role, has been implicated in the acquisition, storage, and transport of lipids, and may be important to the organism since it is incapable of synthesizing most of its lipids de novo. The protein is Fatty acid-binding protein homolog 1 (FABP1) of Echinococcus granulosus (Hydatid tapeworm).